The primary structure comprises 447 residues: MREIVHLQTGQCGNQIGAAFWQTISGEHGLDGSGVYNGTSDLQLERMNVYFNEASGNKYVPRAVLVDLEPGTMDAVRAGPFGQLFRPDNFVFGQSGAGNNWAKGHYTEGAELVDQVLDVVRREAEACDCLQGFQITHSLGGGTGAGMGTLLISKIREEFPDRMMATFSVVPSPKVSDTVVEPYNATLSVHQLVENSDETFCIDNEALYEICMRTLKLSNPSYGDLNHLVSAVMSGVTTCLRFPGQLNSDLRKLAVNMVPFPRLHFFMVGFAPLTSRGAHSFRAVTVPELTQQMYDPKNMMAASDFRNGRYLTCSAIFRGKVSMKEVEDQMRNVQNKNSAYFVEWIPNNVQTALCSIPPRGLKMSSTFVGNSTSIQELFKRVGDQFTAMFRRKAFLHWYTGEGMDEMEFTEAESNMNDLVHEYQQYQDASISEGEEEYEEEQQLENEE.

Residues Gln11, Glu69, Ser138, Gly142, Thr143, Gly144, Asn204, and Asn226 each contribute to the GTP site. Glu69 contributes to the Mg(2+) binding site. Positions 427–447 are disordered; the sequence is DASISEGEEEYEEEQQLENEE. The segment covering 432–447 has biased composition (acidic residues); it reads EGEEEYEEEQQLENEE.

It belongs to the tubulin family. As to quaternary structure, dimer of alpha and beta chains. A typical microtubule is a hollow water-filled tube with an outer diameter of 25 nm and an inner diameter of 15 nM. Alpha-beta heterodimers associate head-to-tail to form protofilaments running lengthwise along the microtubule wall with the beta-tubulin subunit facing the microtubule plus end conferring a structural polarity. Microtubules usually have 13 protofilaments but different protofilament numbers can be found in some organisms and specialized cells. Mg(2+) serves as cofactor.

It is found in the cytoplasm. It localises to the cytoskeleton. Tubulin is the major constituent of microtubules, a cylinder consisting of laterally associated linear protofilaments composed of alpha- and beta-tubulin heterodimers. Microtubules grow by the addition of GTP-tubulin dimers to the microtubule end, where a stabilizing cap forms. Below the cap, tubulin dimers are in GDP-bound state, owing to GTPase activity of alpha-tubulin. This Erysiphe pisi (Pea powdery mildew) protein is Tubulin beta-2 chain (TUB2).